The chain runs to 129 residues: uncharacterized protein (129 aa).

The chain crosses the membrane as a helical span at residues 77 to 97; the sequence is ILAVFIISFIIVVVGVLLLGL. Residues 109–129 form a disordered region; it reads SSNDKKLQSNDEEKQALAEKA. Basic and acidic residues predominate over residues 111–129; it reads NDKKLQSNDEEKQALAEKA.

The protein localises to the vacuole membrane. This is an uncharacterized protein from Saccharomyces cerevisiae (strain ATCC 204508 / S288c) (Baker's yeast).